A 204-amino-acid chain; its full sequence is Cold and drought-regulated protein CORA (204 aa).

18 consecutive repeat copies span residues 54–59 (YNHGGG), 65–70 (YNHGGG), 71–76 (YNHGGG), 78–83 (YHNGGG), 85–90 (YNHGGG), 98–100 (HGG), 101–103 (HGG), 112–114 (HGG), 115–117 (HGG), 126–128 (HGG), 129–131 (HGG), 164–169 (YNHGGG), 171–176 (YNHGGG), 178–180 (HGG), 181–183 (HGG), 184–186 (HGG), 187–189 (HGG), and 190–192 (HGG). Residues 54 to 176 (YNHGGGYNGG…GGGGYNHGGG (123 aa)) form a 7 X 6 AA repeats of Y-N-H-G-G-G region. Residues 98–192 (HGGHGGGGYN…GHGGHGGHGG (95 aa)) are 11 X 3 AA repeats of H-G-G. Over residues 169-194 (GGYNHGGGGHGGHGGHGGHGGHGGHG) the composition is skewed to gly residues. The interval 169 to 204 (GGYNHGGGGHGGHGGHGGHGGHGGHGAVQTEDNTQN) is disordered.

It belongs to the GRP family.

Its function is as follows. May be involved in resistance of the plant to environmental stress. The sequence is that of Cold and drought-regulated protein CORA (CORA) from Medicago sativa (Alfalfa).